A 150-amino-acid polypeptide reads, in one-letter code: Flagellar assembly factor FliW (150 aa).

The protein belongs to the FliW family. As to quaternary structure, interacts with translational regulator CsrA and flagellin(s).

Its subcellular location is the cytoplasm. Its function is as follows. Acts as an anti-CsrA protein, binds CsrA and prevents it from repressing translation of its target genes, one of which is flagellin. Binds to flagellin and participates in the assembly of the flagellum. The protein is Flagellar assembly factor FliW of Leptospira interrogans serogroup Icterohaemorrhagiae serovar Lai (strain 56601).